A 361-amino-acid chain; its full sequence is Chorismate synthase (361 aa).

NADP(+)-binding residues include R48 and R54. Residues 125–127, 238–239, G278, 293–297, and R319 contribute to the FMN site; these read RSS, NA, and KPTSS.

The protein belongs to the chorismate synthase family. As to quaternary structure, homotetramer. FMNH2 is required as a cofactor.

It catalyses the reaction 5-O-(1-carboxyvinyl)-3-phosphoshikimate = chorismate + phosphate. The protein operates within metabolic intermediate biosynthesis; chorismate biosynthesis; chorismate from D-erythrose 4-phosphate and phosphoenolpyruvate: step 7/7. Catalyzes the anti-1,4-elimination of the C-3 phosphate and the C-6 proR hydrogen from 5-enolpyruvylshikimate-3-phosphate (EPSP) to yield chorismate, which is the branch point compound that serves as the starting substrate for the three terminal pathways of aromatic amino acid biosynthesis. This reaction introduces a second double bond into the aromatic ring system. This chain is Chorismate synthase, found in Citrobacter koseri (strain ATCC BAA-895 / CDC 4225-83 / SGSC4696).